Consider the following 408-residue polypeptide: MYHRHSAPPPPGWSGGYPPRQQQWPPPQPYEYPPYPPQGPPPAHTFPPPAHRDYPSPYPTPPPHSPSPYQHPHHGHSQSWSVPAVPPRPPLEAQQFGNGAPSHYRFQYSACTGRRRALLIGINYIGQPNQLRGCINDVTNMSTFLHERYGYRREDMVILTDDQKNPLSIPTKANILRAMQWLVKDAQPNDSLFLHFSGHGGRTPDLDGDEEDGYDDVIYPVDYRVAGHIVDDEMHNIMVRPLRPGVRLTVIFDSCHSGTALDLPYVYSTQGILKEPNLAKEAAQDLFSAISSYGKGDLSGVAMTAIGFLKKAAKGDSARQRTVMTKTSPADVVMFSGSKDTQTSADTFQDGEARGALSWAFIKSLKQWPNQSYLQLLNSIRAQLDGKYTQKPQLSCSHPLDVNLLFVM.

The tract at residues M1–N98 is disordered. 2 stretches are compositionally biased toward pro residues: residues W24–P49 and S56–P66. Active-site residues include H199 and C255.

It belongs to the peptidase C14B family.

Its function is as follows. Involved in cell death (apoptosis). Required for the apoptotic-like loss of membrane phospholipid asymmetry at stationary phase and facilitates growth under conditions of endoplasmic reticulum stress. In Aspergillus fumigatus (strain CBS 144.89 / FGSC A1163 / CEA10) (Neosartorya fumigata), this protein is Metacaspase-1B (casB).